The primary structure comprises 386 residues: Enamidase (386 aa).

3 residues coordinate Zn(2+): His-67, His-69, and Glu-164. The Fe cation site is built by Glu-164, His-193, and His-220. Asp-276 lines the Zn(2+) pocket.

Homotetramer. Dimer of dimers. The cofactor is Fe cation. Zn(2+) is required as a cofactor.

The enzyme catalyses 1,4,5,6-tetrahydro-6-oxonicotinate + 2 H2O = 2-formylglutarate + NH4(+). The protein operates within cofactor degradation; nicotinate degradation; propanoate and pyruvate from 6-hydroxynicotinate: step 2/8. Its function is as follows. Decyclization of 6-oxo-1,4,5,6-tetrahydronicotinate to form 2-(enamine)glutarate, followed by hydrolysis to form (S)-2-formylglutarate. The chain is Enamidase from Eubacterium barkeri (Clostridium barkeri).